Reading from the N-terminus, the 220-residue chain is Fructose-6-phosphate aldolase (220 aa).

Lysine 85 (schiff-base intermediate with substrate) is an active-site residue.

It belongs to the transaldolase family. Type 3A subfamily. Homodecamer.

It localises to the cytoplasm. The catalysed reaction is beta-D-fructose 6-phosphate = dihydroxyacetone + D-glyceraldehyde 3-phosphate. Its function is as follows. Catalyzes the reversible formation of fructose 6-phosphate from dihydroxyacetone and D-glyceraldehyde 3-phosphate via an aldolization reaction. This is Fructose-6-phosphate aldolase from Salmonella gallinarum (strain 287/91 / NCTC 13346).